A 411-amino-acid polypeptide reads, in one-letter code: Putative nickel insertion protein (411 aa).

Belongs to the LarC family.

The polypeptide is Putative nickel insertion protein (Methanothermobacter thermautotrophicus (strain ATCC 29096 / DSM 1053 / JCM 10044 / NBRC 100330 / Delta H) (Methanobacterium thermoautotrophicum)).